A 368-amino-acid chain; its full sequence is Quinolinate synthase (368 aa).

Iminosuccinate-binding residues include histidine 46 and serine 63. Cysteine 110 serves as a coordination point for [4Fe-4S] cluster. Residues 141-143 and serine 162 each bind iminosuccinate; that span reads YVN. A [4Fe-4S] cluster-binding site is contributed by cysteine 230. Iminosuccinate is bound by residues 256 to 258 and threonine 273; that span reads HPE. Cysteine 320 provides a ligand contact to [4Fe-4S] cluster.

Belongs to the quinolinate synthase family. Type 3 subfamily. [4Fe-4S] cluster serves as cofactor.

Its subcellular location is the cytoplasm. It carries out the reaction iminosuccinate + dihydroxyacetone phosphate = quinolinate + phosphate + 2 H2O + H(+). The protein operates within cofactor biosynthesis; NAD(+) biosynthesis; quinolinate from iminoaspartate: step 1/1. In terms of biological role, catalyzes the condensation of iminoaspartate with dihydroxyacetone phosphate to form quinolinate. This Bacillus cereus (strain B4264) protein is Quinolinate synthase.